The primary structure comprises 253 residues: Imidazole glycerol phosphate synthase subunit HisF (253 aa).

Active-site residues include aspartate 11 and aspartate 130.

Belongs to the HisA/HisF family. In terms of assembly, heterodimer of HisH and HisF.

The protein localises to the cytoplasm. The catalysed reaction is 5-[(5-phospho-1-deoxy-D-ribulos-1-ylimino)methylamino]-1-(5-phospho-beta-D-ribosyl)imidazole-4-carboxamide + L-glutamine = D-erythro-1-(imidazol-4-yl)glycerol 3-phosphate + 5-amino-1-(5-phospho-beta-D-ribosyl)imidazole-4-carboxamide + L-glutamate + H(+). Its pathway is amino-acid biosynthesis; L-histidine biosynthesis; L-histidine from 5-phospho-alpha-D-ribose 1-diphosphate: step 5/9. IGPS catalyzes the conversion of PRFAR and glutamine to IGP, AICAR and glutamate. The HisF subunit catalyzes the cyclization activity that produces IGP and AICAR from PRFAR using the ammonia provided by the HisH subunit. This chain is Imidazole glycerol phosphate synthase subunit HisF, found in Cereibacter sphaeroides (strain ATCC 17025 / ATH 2.4.3) (Rhodobacter sphaeroides).